The primary structure comprises 201 residues: MARYTGPVTRKSRRLRVDLVGGDNSFERRPYPPGQAGRARIKESEYLLQLQEKQKAKYTYGVLEKQFRRYYAEANRRPGKTGDNLVILLESRLDNVVYRAGLARTRRQARQLVSHGHFTVNGKKVNVPSFKVSQYDIIDVREKSRSMLWFEEAQEALVDTIVPAWLQVVPSTLRILVHQLPERAQIDIPLQEQLIVELYSK.

The 61-residue stretch at 91-151 (SRLDNVVYRA…EKSRSMLWFE (61 aa)) folds into the S4 RNA-binding domain.

This sequence belongs to the universal ribosomal protein uS4 family. As to quaternary structure, part of the 30S ribosomal subunit. Contacts protein S5. The interaction surface between S4 and S5 is involved in control of translational fidelity.

One of the primary rRNA binding proteins, it binds directly to 16S rRNA where it nucleates assembly of the body of the 30S subunit. Its function is as follows. With S5 and S12 plays an important role in translational accuracy. This chain is Small ribosomal subunit protein uS4, found in Corynebacterium jeikeium (strain K411).